The following is a 105-amino-acid chain: UPF0145 protein Ping_0381 (105 aa).

The protein belongs to the UPF0145 family.

The sequence is that of UPF0145 protein Ping_0381 from Psychromonas ingrahamii (strain DSM 17664 / CCUG 51855 / 37).